The sequence spans 258 residues: Phosphate import ATP-binding protein PstB (258 aa).

In terms of domain architecture, ABC transporter spans 12 to 253; that stretch reads IEVKNLNFYY…PARKETEDYI (242 aa). ATP is bound at residue 44 to 51; that stretch reads GPSGCGKS.

This sequence belongs to the ABC transporter superfamily. Phosphate importer (TC 3.A.1.7) family. As to quaternary structure, the complex is composed of two ATP-binding proteins (PstB), two transmembrane proteins (PstC and PstA) and a solute-binding protein (PstS).

The protein localises to the cell inner membrane. It catalyses the reaction phosphate(out) + ATP + H2O = ADP + 2 phosphate(in) + H(+). Functionally, part of the ABC transporter complex PstSACB involved in phosphate import. Responsible for energy coupling to the transport system. This chain is Phosphate import ATP-binding protein PstB, found in Bordetella avium (strain 197N).